The primary structure comprises 307 residues: Serine/threonine-protein phosphatase 4 catalytic subunit (307 aa).

The residue at position 2 (Ala-2) is an N-acetylalanine. 4 residues coordinate Mn(2+): Asp-54, His-56, Asp-82, and Asn-114. The Proton donor role is filled by His-115. 2 residues coordinate Mn(2+): His-164 and His-238. Leu-307 is modified (leucine methyl ester).

This sequence belongs to the PPP phosphatase family. PP-4 (PP-X) subfamily. As to quaternary structure, serine/threonine-protein phosphatase 4 (PP4) occurs in different assemblies of the catalytic and one or more regulatory subunits. Component of the PP4 complexes PPP4C-PPP4R1, PPP4C-PPP4R2, PPP4C-PPP4R2-PPP4R3A, PPP4C-PPP4R2-PPP4R3B and PPP4C-PPP4R4. The PPP4C-PPP4R2 complex appears to be a tetramer composed of 2 molecules of PPP4C and 2 molecules of PPP4R2. Interacts with REL, NFKB1/p50 and RELA. Interacts with SMN1 and GEMIN4. Interacts with IRS4 (phosphorylated). Interacts with SMEK1/PPP4R3A; the interaction requires PP4R2. Interacts with HDAC3. Requires Mn(2+) as cofactor. In terms of processing, methylation at the C-terminal Leu-307 is critical for interactions with regulatory subunits and functions in DNA repair.

The protein resides in the cytoplasm. Its subcellular location is the nucleus. It localises to the cytoskeleton. The protein localises to the microtubule organizing center. It is found in the centrosome. The catalysed reaction is O-phospho-L-seryl-[protein] + H2O = L-seryl-[protein] + phosphate. The enzyme catalyses O-phospho-L-threonyl-[protein] + H2O = L-threonyl-[protein] + phosphate. Functionally, protein phosphatase that is involved in many processes such as microtubule organization at centrosomes, maturation of spliceosomal snRNPs, apoptosis, DNA repair, tumor necrosis factor (TNF)-alpha signaling, activation of c-Jun N-terminal kinase MAPK8, regulation of histone acetylation, DNA damage checkpoint signaling, NF-kappa-B activation and cell migration. The PPP4C-PPP4R1 PP4 complex may play a role in dephosphorylation and regulation of HDAC3. The PPP4C-PPP4R2-PPP4R3A PP4 complex specifically dephosphorylates H2AX phosphorylated on Ser-140 (gamma-H2AX) generated during DNA replication and required for DNA double strand break repair. Dephosphorylates NDEL1 at CDK1 phosphorylation sites and negatively regulates CDK1 activity in interphase. In response to DNA damage, catalyzes RPA2 dephosphorylation, an essential step for DNA repair since it allows the efficient RPA2-mediated recruitment of RAD51 to chromatin. The sequence is that of Serine/threonine-protein phosphatase 4 catalytic subunit (PPP4C) from Homo sapiens (Human).